The primary structure comprises 127 residues: Biogenesis of lysosome-related organelles complex 1 subunit 2 (127 aa).

The protein belongs to the BLOC1S2 family. As to quaternary structure, component of the biogenesis of lysosome-related organelles complex-1 (BLOC-1). Interacts with BLOS1 and SNX1.

Its subcellular location is the cytoplasm. It localises to the endosome. Component of the biogenesis of lysosome-related organelles complex-1 (BLOC-1), a complex that mediates the vacuolar degradative transport via the intracellular vesicle trafficking from the endosome to the vacuole. The polypeptide is Biogenesis of lysosome-related organelles complex 1 subunit 2 (BLOS2) (Arabidopsis thaliana (Mouse-ear cress)).